A 454-amino-acid chain; its full sequence is UDP-N-acetylmuramate--L-alanine ligase (454 aa).

113–119 (GSHGKTT) is a binding site for ATP.

Belongs to the MurCDEF family.

Its subcellular location is the cytoplasm. The catalysed reaction is UDP-N-acetyl-alpha-D-muramate + L-alanine + ATP = UDP-N-acetyl-alpha-D-muramoyl-L-alanine + ADP + phosphate + H(+). It participates in cell wall biogenesis; peptidoglycan biosynthesis. Its function is as follows. Cell wall formation. This chain is UDP-N-acetylmuramate--L-alanine ligase, found in Aquifex aeolicus (strain VF5).